A 268-amino-acid polypeptide reads, in one-letter code: Leucyl/phenylalanyl-tRNA--protein transferase (268 aa).

This sequence belongs to the L/F-transferase family.

It is found in the cytoplasm. The catalysed reaction is N-terminal L-lysyl-[protein] + L-leucyl-tRNA(Leu) = N-terminal L-leucyl-L-lysyl-[protein] + tRNA(Leu) + H(+). It catalyses the reaction N-terminal L-arginyl-[protein] + L-leucyl-tRNA(Leu) = N-terminal L-leucyl-L-arginyl-[protein] + tRNA(Leu) + H(+). The enzyme catalyses L-phenylalanyl-tRNA(Phe) + an N-terminal L-alpha-aminoacyl-[protein] = an N-terminal L-phenylalanyl-L-alpha-aminoacyl-[protein] + tRNA(Phe). Functions in the N-end rule pathway of protein degradation where it conjugates Leu, Phe and, less efficiently, Met from aminoacyl-tRNAs to the N-termini of proteins containing an N-terminal arginine or lysine. The sequence is that of Leucyl/phenylalanyl-tRNA--protein transferase from Psychrobacter arcticus (strain DSM 17307 / VKM B-2377 / 273-4).